The chain runs to 284 residues: Tropomyosin Pen a 1.0102 (284 aa).

The disordered stretch occupies residues methionine 1 to glutamine 51. Residues methionine 1–glutamate 273 adopt a coiled-coil conformation. Positions lysine 12 to asparagine 45 are enriched in basic and acidic residues. 7 igE-binding regions span residues valine 43–leucine 57, valine 85–arginine 105, arginine 133–phenylalanine 153, glutamate 187–asparagine 202, glutamine 247–tyrosine 284, leucine 249–leucine 260, and lysine 266–leucine 281.

It belongs to the tropomyosin family. Homodimer.

In terms of biological role, tropomyosin, in association with the troponin complex, plays a central role in the calcium dependent regulation of muscle contraction. In Penaeus aztecus (Brown shrimp), this protein is Tropomyosin Pen a 1.0102.